The chain runs to 1172 residues: DNA-directed RNA polymerase subunit beta (1172 aa).

This sequence belongs to the RNA polymerase beta chain family. The RNAP catalytic core consists of 2 alpha, 1 beta, 1 beta' and 1 omega subunit. When a sigma factor is associated with the core the holoenzyme is formed, which can initiate transcription.

It catalyses the reaction RNA(n) + a ribonucleoside 5'-triphosphate = RNA(n+1) + diphosphate. DNA-dependent RNA polymerase catalyzes the transcription of DNA into RNA using the four ribonucleoside triphosphates as substrates. The chain is DNA-directed RNA polymerase subunit beta from Mycobacterium sp. (strain KMS).